We begin with the raw amino-acid sequence, 226 residues long: PKHD-type hydroxylase AZC_3753 (226 aa).

A Fe2OG dioxygenase domain is found at 78–178 (RILPPMFNRY…RVASFFWTQS (101 aa)). 3 residues coordinate Fe cation: histidine 96, aspartate 98, and histidine 159. Position 169 (arginine 169) interacts with 2-oxoglutarate.

It depends on Fe(2+) as a cofactor. L-ascorbate serves as cofactor.

This Azorhizobium caulinodans (strain ATCC 43989 / DSM 5975 / JCM 20966 / LMG 6465 / NBRC 14845 / NCIMB 13405 / ORS 571) protein is PKHD-type hydroxylase AZC_3753.